The chain runs to 202 residues: ATP-dependent Clp protease proteolytic subunit (202 aa).

Serine 106 functions as the Nucleophile in the catalytic mechanism. The active site involves histidine 131.

It belongs to the peptidase S14 family. Fourteen ClpP subunits assemble into 2 heptameric rings which stack back to back to give a disk-like structure with a central cavity, resembling the structure of eukaryotic proteasomes.

The protein resides in the cytoplasm. It catalyses the reaction Hydrolysis of proteins to small peptides in the presence of ATP and magnesium. alpha-casein is the usual test substrate. In the absence of ATP, only oligopeptides shorter than five residues are hydrolyzed (such as succinyl-Leu-Tyr-|-NHMec, and Leu-Tyr-Leu-|-Tyr-Trp, in which cleavage of the -Tyr-|-Leu- and -Tyr-|-Trp bonds also occurs).. Cleaves peptides in various proteins in a process that requires ATP hydrolysis. Has a chymotrypsin-like activity. Plays a major role in the degradation of misfolded proteins. The sequence is that of ATP-dependent Clp protease proteolytic subunit from Methylibium petroleiphilum (strain ATCC BAA-1232 / LMG 22953 / PM1).